The sequence spans 259 residues: Global transcriptional regulator CodY (259 aa).

The interval 1–155 is GAF domain; sequence MTLLEKTRKI…GGTVVGMEIL (155 aa). A DNA-binding region (H-T-H motif) is located at residues 203–222; the sequence is ASKIADRVGITRSVIVNALR.

The protein belongs to the CodY family.

It is found in the cytoplasm. DNA-binding global transcriptional regulator which is involved in the adaptive response to starvation and acts by directly or indirectly controlling the expression of numerous genes in response to nutrient availability. During rapid exponential growth, CodY is highly active and represses genes whose products allow adaptation to nutrient depletion. This is Global transcriptional regulator CodY from Listeria welshimeri serovar 6b (strain ATCC 35897 / DSM 20650 / CCUG 15529 / CIP 8149 / NCTC 11857 / SLCC 5334 / V8).